Consider the following 327-residue polypeptide: 4-hydroxy-2-oxoglutarate aldolase, mitochondrial (327 aa).

The N-terminal 25 residues, 1-25, are a transit peptide targeting the mitochondrion; that stretch reads MLGPQVWSSVRQGLSRSLSRNVGVW. 77 to 78 lines the substrate pocket; sequence SN. The Schiff-base intermediate with substrate role is filled by K196. 2 residues coordinate substrate: S198 and G222.

Belongs to the DapA family. As to quaternary structure, homotetramer.

Its subcellular location is the mitochondrion. It carries out the reaction (4S)-4-hydroxy-2-oxoglutarate = glyoxylate + pyruvate. It catalyses the reaction (4R)-4-hydroxy-2-oxoglutarate = glyoxylate + pyruvate. With respect to regulation, inhibited by divalent cations. Its function is as follows. Catalyzes the final step in the metabolic pathway of hydroxyproline. The chain is 4-hydroxy-2-oxoglutarate aldolase, mitochondrial (HOGA1) from Homo sapiens (Human).